Here is a 67-residue protein sequence, read N- to C-terminus: Conotoxin LiC33 (67 aa).

Positions 1–22 are cleaved as a signal peptide; that stretch reads MRCVPVFIILLLLSPSAPSVDA. Residues 23–48 constitute a propeptide that is removed on maturation; it reads HPKTKDDVPLASFHDDAKRTLQRLWI. The residue at position 63 (phenylalanine 63) is a Phenylalanine amide. The propeptide occupies 65–67; sequence KGK.

Belongs to the conotoxin T superfamily. In terms of processing, contains 2 disulfide bonds that can be either 'C1-C3, C2-C4' or 'C1-C4, C2-C3', since these disulfide connectivities have been observed for conotoxins with cysteine framework V (for examples, see AC P0DQQ7 and AC P81755). As to expression, expressed by the venom duct.

It is found in the secreted. The chain is Conotoxin LiC33 from Conus lividus (Livid cone).